A 416-amino-acid chain; its full sequence is UDP-N-acetylglucosamine 1-carboxyvinyltransferase (416 aa).

A phosphoenolpyruvate-binding site is contributed by 22-23 (KN). Arginine 92 serves as a coordination point for UDP-N-acetyl-alpha-D-glucosamine. Catalysis depends on cysteine 116, which acts as the Proton donor. Cysteine 116 is subject to 2-(S-cysteinyl)pyruvic acid O-phosphothioketal. 2 residues coordinate UDP-N-acetyl-alpha-D-glucosamine: aspartate 306 and isoleucine 328.

This sequence belongs to the EPSP synthase family. MurA subfamily.

It is found in the cytoplasm. The enzyme catalyses phosphoenolpyruvate + UDP-N-acetyl-alpha-D-glucosamine = UDP-N-acetyl-3-O-(1-carboxyvinyl)-alpha-D-glucosamine + phosphate. It functions in the pathway cell wall biogenesis; peptidoglycan biosynthesis. Its function is as follows. Cell wall formation. Adds enolpyruvyl to UDP-N-acetylglucosamine. The protein is UDP-N-acetylglucosamine 1-carboxyvinyltransferase of Buchnera aphidicola subsp. Baizongia pistaciae (strain Bp).